A 341-amino-acid chain; its full sequence is Ribosomal RNA small subunit methyltransferase H (341 aa).

Residues 47–49 (GGY), aspartate 64, phenylalanine 91, aspartate 109, and glutamine 116 each bind S-adenosyl-L-methionine. The tract at residues 292–318 (VAASEDEASRNPRARSAKLRAGVRTPA) is disordered.

Belongs to the methyltransferase superfamily. RsmH family.

The protein resides in the cytoplasm. The enzyme catalyses cytidine(1402) in 16S rRNA + S-adenosyl-L-methionine = N(4)-methylcytidine(1402) in 16S rRNA + S-adenosyl-L-homocysteine + H(+). Specifically methylates the N4 position of cytidine in position 1402 (C1402) of 16S rRNA. The polypeptide is Ribosomal RNA small subunit methyltransferase H (Sinorhizobium fredii (strain NBRC 101917 / NGR234)).